Reading from the N-terminus, the 740-residue chain is Catalase-peroxidase (740 aa).

The disordered stretch occupies residues 1–32 (MPEDRPIEDSPPIGEAQTDAPAGGCPAGFGRI). A cross-link (tryptophyl-tyrosyl-methioninium (Trp-Tyr) (with M-263)) is located at residues 113–237 (WHAAGTYRVS…LAAVQMGLIY (125 aa)). Catalysis depends on His-114, which acts as the Proton acceptor. A cross-link (tryptophyl-tyrosyl-methioninium (Tyr-Met) (with W-113)) is located at residues 237 to 263 (YVNPEGPNGNPDPQASAIDIRETFGRM). A heme b-binding site is contributed by His-278.

It belongs to the peroxidase family. Peroxidase/catalase subfamily. In terms of assembly, homodimer or homotetramer. The cofactor is heme b. Post-translationally, formation of the three residue Trp-Tyr-Met cross-link is important for the catalase, but not the peroxidase activity of the enzyme.

The enzyme catalyses H2O2 + AH2 = A + 2 H2O. It catalyses the reaction 2 H2O2 = O2 + 2 H2O. Functionally, bifunctional enzyme with both catalase and broad-spectrum peroxidase activity. May play a role in the intracellular survival of mycobacteria. This Mycolicibacterium smegmatis (Mycobacterium smegmatis) protein is Catalase-peroxidase.